The following is a 58-amino-acid chain: Preprotein translocase subunit SecG (58 aa).

Over 1–32 the chain is Cytoplasmic; the sequence is MARKRRKGGEGLVTAIGLVRFYEEVEEKIKVP. A helical transmembrane segment spans residues 33–54; sequence PEAVIGAAFALSIMTIALDLLL. The Extracellular portion of the chain corresponds to 55-58; the sequence is KAAR.

This sequence belongs to the SEC61-beta family. As to quaternary structure, component of the protein translocase complex. Heterotrimer consisting of alpha (SecY), beta (SecG) and gamma (SecE) subunits. Can form oligomers of the heterotrimer.

The protein resides in the cell membrane. In terms of biological role, involved in protein export. The function of the beta subunit is unknown, but it may be involved in stabilization of the trimeric complex. In Ignicoccus hospitalis (strain KIN4/I / DSM 18386 / JCM 14125), this protein is Preprotein translocase subunit SecG.